The following is a 204-amino-acid chain: Large ribosomal subunit protein uL4 (204 aa).

The disordered stretch occupies residues 44–76 (RAGTHRTKGMGEISGTTKKPYRQKGTGSARQGS).

Belongs to the universal ribosomal protein uL4 family. Part of the 50S ribosomal subunit.

In terms of biological role, one of the primary rRNA binding proteins, this protein initially binds near the 5'-end of the 23S rRNA. It is important during the early stages of 50S assembly. It makes multiple contacts with different domains of the 23S rRNA in the assembled 50S subunit and ribosome. Functionally, forms part of the polypeptide exit tunnel. The chain is Large ribosomal subunit protein uL4 from Gluconobacter oxydans (strain 621H) (Gluconobacter suboxydans).